The chain runs to 199 residues: uncharacterized protein (199 aa).

This is an uncharacterized protein from Shigella flexneri.